The chain runs to 2636 residues: Ankyrin repeat and KH domain-containing protein CBG24701 (2636 aa).

ANK repeat units lie at residues 252-281 (SRIT…DPNA), 286-317 (NCNT…KVDV), 361-390 (NDNS…KNQQ), 435-464 (NLPS…RIDE), 468-500 (HKNT…DVNA), 505-534 (SGDT…DLTT), 536-564 (KITP…TIPQ), 566-595 (QLSR…DLNF), 598-627 (DERT…SVNF), 632-661 (NDAT…DPML), and 665-695 (DGVN…NMDL). Disordered stretches follow at residues 994–1030 (PIDA…TTIE), 1172–1191 (KSNR…KKGK), and 1230–1268 (NNTQ…VIDK). Residues 1006-1030 (QQTGPKTTSLTTPQPDESNGATTIE) are compositionally biased toward polar residues. Residues 1233-1245 (QVQQQQGQQQQGQ) are compositionally biased toward low complexity. The span at 1249-1260 (THSEGDGTERAK) shows a compositional bias: basic and acidic residues. ANK repeat units follow at residues 1273 to 1302 (TLET…NIEH), 1306 to 1335 (KGFT…AIEA), 1340 to 1369 (TKDT…NKEH), 1373 to 1402 (SDYT…EINS), 1408 to 1437 (LGIS…DINA), 1447 to 1476 (YRNT…NVEH), 1480 to 1509 (TGLT…DPNA), 1515 to 1546 (TKDT…DIRN), 1548 to 1577 (KGCS…DTDM), and 1581 to 1610 (RKMS…QFPN). A coiled-coil region spans residues 1638–1696 (RNAKKAQAETAEETANRLLQLIDDEKERDINKKQKIKDKKKQKKEAKKKFQAEQEQLSA). The disordered stretch occupies residues 1669-1857 (KKQKIKDKKK…SSISERQHSW (189 aa)). A compositionally biased stretch (basic residues) spans 1670–1686 (KQKIKDKKKQKKEAKKK). Pro residues predominate over residues 1698-1708 (PSKPEPVVAPE). Positions 1709–1722 (PEPEPETEPVEEPA) are enriched in acidic residues. Residues 1811–1829 (DWQKAGKEGKKVRPKREGR) show a composition bias toward basic and acidic residues. The span at 1832–1851 (APSSAGSSQAKHRSNTSSIS) shows a compositional bias: polar residues. The 66-residue stretch at 1864–1929 (VKAYEFTVPG…DVVSMAVNII (66 aa)) folds into the KH domain. 7 disordered regions span residues 1980–2182 (SASI…SLPS), 2196–2221 (FKPT…STAS), 2269–2292 (NSTA…SNDF), 2301–2320 (SNQK…NSQL), 2352–2417 (SQSS…TQQQ), 2444–2465 (MHRQ…NPYY), and 2539–2636 (GMMQ…SSRM). The span at 1994–2008 (SQCNRSSKSHGNQAT) shows a compositional bias: polar residues. Over residues 2025 to 2045 (TPPTQTQTKQQPTPSPQVQQP) the composition is skewed to low complexity. The segment covering 2057–2083 (SLAQSSVPQATENVTKPTQTPPASVQQ) has biased composition (polar residues). Low complexity-rich tracts occupy residues 2099-2119 (QVVQ…QRPQ) and 2139-2148 (QQHMQQIQQQ). Residues 2167–2179 (PGPPVQPQTPPQS) are compositionally biased toward pro residues. Over residues 2269–2280 (NSTASSLNTATT) the composition is skewed to low complexity. The segment covering 2281–2292 (KNDTSDWGSNDF) has biased composition (polar residues). Composition is skewed to low complexity over residues 2361–2373 (QHQQ…MQDP) and 2391–2417 (PQQF…TQQQ). Composition is skewed to polar residues over residues 2449–2465 (NSSS…NPYY), 2565–2574 (RSASGSSQNR), and 2583–2595 (QQPQ…TQAD). Positions 2599–2615 (RLLLQQQQQQRSSQQQQ) are enriched in low complexity. Positions 2616 to 2636 (NPTNQGLPQKWSNTWNSSSRM) are enriched in polar residues.

Belongs to the mask family.

Its subcellular location is the cytoplasm. The sequence is that of Ankyrin repeat and KH domain-containing protein CBG24701 from Caenorhabditis briggsae.